Consider the following 301-residue polypeptide: tRNA dimethylallyltransferase (301 aa).

Gly8–Thr15 serves as a coordination point for ATP. Thr10 to Thr15 lines the substrate pocket. The segment at Asp33–Gln36 is interaction with substrate tRNA.

The protein belongs to the IPP transferase family. As to quaternary structure, monomer. The cofactor is Mg(2+).

The catalysed reaction is adenosine(37) in tRNA + dimethylallyl diphosphate = N(6)-dimethylallyladenosine(37) in tRNA + diphosphate. Functionally, catalyzes the transfer of a dimethylallyl group onto the adenine at position 37 in tRNAs that read codons beginning with uridine, leading to the formation of N6-(dimethylallyl)adenosine (i(6)A). The chain is tRNA dimethylallyltransferase from Thermosipho africanus (strain TCF52B).